The following is a 611-amino-acid chain: Poly(3-hydroxyalkanoate) polymerase subunit PhaC (611 aa).

Cys-349 is a catalytic residue.

This sequence belongs to the PHA/PHB synthase family. Type I PhaC subfamily. In terms of assembly, monomer.

The protein localises to the cytoplasm. It carries out the reaction (3R)-3-hydroxybutanoyl-CoA + [(3R)-hydroxybutanoate](n) = [(3R)-hydroxybutanoate](n+1) + CoA. It participates in biopolymer metabolism; poly-(R)-3-hydroxybutanoate biosynthesis. Functionally, polymerizes D(-)-3-hydroxybutyryl-CoA to create PHB which consists of thousands of hydroxybutyrate molecules linked end to end. PHB serves as an intracellular energy reserve material when cells grow under conditions of nutrient limitation. The chain is Poly(3-hydroxyalkanoate) polymerase subunit PhaC from Rhizobium meliloti (strain 1021) (Ensifer meliloti).